The sequence spans 214 residues: Threonylcarbamoyl-AMP synthase (214 aa).

Residues 9–214 (TDSVIQAAHW…GDALTGQIIR (206 aa)) enclose the YrdC-like domain.

The protein belongs to the SUA5 family. TsaC subfamily.

Its subcellular location is the cytoplasm. The enzyme catalyses L-threonine + hydrogencarbonate + ATP = L-threonylcarbamoyladenylate + diphosphate + H2O. Functionally, required for the formation of a threonylcarbamoyl group on adenosine at position 37 (t(6)A37) in tRNAs that read codons beginning with adenine. Catalyzes the conversion of L-threonine, HCO(3)(-)/CO(2) and ATP to give threonylcarbamoyl-AMP (TC-AMP) as the acyladenylate intermediate, with the release of diphosphate. In Psychrobacter arcticus (strain DSM 17307 / VKM B-2377 / 273-4), this protein is Threonylcarbamoyl-AMP synthase.